A 101-amino-acid chain; its full sequence is ATP-dependent Clp protease adapter protein ClpS (101 aa).

Belongs to the ClpS family. As to quaternary structure, binds to the N-terminal domain of the chaperone ClpA.

Functionally, involved in the modulation of the specificity of the ClpAP-mediated ATP-dependent protein degradation. The polypeptide is ATP-dependent Clp protease adapter protein ClpS (Mycobacterium bovis (strain ATCC BAA-935 / AF2122/97)).